The sequence spans 247 residues: Mannose-P-dolichol utilization defect 1 protein (247 aa).

Alanine 2 bears the N-acetylalanine mark. Residues 39 to 105 (KILLSKGLGL…NNFPFSSWGE (67 aa)) enclose the PQ-loop 1 domain. A run of 7 helical transmembrane segments spans residues 46–66 (LGLGIVAGSLLVKLPQIFKIL), 74–94 (LSLQSVMLELVALTGTVIYSI), 103–123 (WGEALFLTLQTITICLLVLHY), 128–145 (VKGVALLACYATLLLALL), 151–171 (LAVVTMLQASNVPAVVVGKLL), 185–205 (LSAITVFMLFGGSLARIFTSV), and 213–233 (MAGVFVVSSLCNGLIAAQVLF). The PQ-loop 2 domain occupies 159 to 216 (ASNVPAVVVGKLLQAATNYHNGHTGQLSAITVFMLFGGSLARIFTSVQETGDPLMAGV).

This sequence belongs to the MPDU1 (TC 2.A.43.3) family.

It is found in the membrane. In terms of biological role, required for normal utilization of mannose-dolichol phosphate (Dol-P-Man) in the synthesis of N-linked and O-linked oligosaccharides and GPI anchors. The polypeptide is Mannose-P-dolichol utilization defect 1 protein (MPDU1) (Cricetulus griseus (Chinese hamster)).